The following is a 599-amino-acid chain: Nucleosomal histone kinase 1 (599 aa).

The region spanning 47–328 is the Protein kinase domain; the sequence is WRIGPSIGVG…PDYDKCRSWF (282 aa). ATP is bound by residues 53–61 and K77; that span reads IGVGGFGEI. The Proton acceptor role is filled by D183. Disordered regions lie at residues 340-507 and 532-599; these read NGDL…PQPR and RKKK…KYQG. Over residues 349 to 361 the composition is skewed to polar residues; that stretch reads PQTSSNNNLSPPG. Phosphoserine occurs at positions 376, 381, 382, 388, and 390. Over residues 435–448 the composition is skewed to basic and acidic residues; it reads VKTEPKSTPRERAT. Phosphoserine is present on S483. Positions 546 to 558 are enriched in low complexity; it reads SRTPSSRSALASS. S564 and S586 each carry phosphoserine. Position 589 is a phosphothreonine (T589).

This sequence belongs to the protein kinase superfamily. CK1 Ser/Thr protein kinase family. VRK subfamily. In terms of assembly, may interact with Unc-89 (via protein kinase domain 1). Interacts with L(2)gl. The cofactor is Mg(2+). Post-translationally, phosphorylated during mitosis and female meiosis. In terms of tissue distribution, expressed in ovaries (at protein level). Expressed in indirect flight muscle (IFM) (at protein level).

Its subcellular location is the cytoplasm. It is found in the nucleus. The protein resides in the chromosome. The protein localises to the myofibril. It localises to the sarcomere. Its subcellular location is the z line. It is found in the m line. It catalyses the reaction L-seryl-[protein] + ATP = O-phospho-L-seryl-[protein] + ADP + H(+). The catalysed reaction is L-threonyl-[protein] + ATP = O-phospho-L-threonyl-[protein] + ADP + H(+). In terms of biological role, serine/threonine-protein kinase involved in somatic mitosis and female meiosis. Required for spindle organization in mitosis, and for the establishment or maintenance of meiosis-specific chromosomal configurations, including the prophase I karyosome and the metaphase I spindle. Specifically phosphorylates nucleosomal H2A on 'Thr-119'. Required for the development and organization of indirect flight muscle sarcomeres by regulating the formation of M line and H zone and the correct assembly of thick and thin filaments in the sarcomere. This chain is Nucleosomal histone kinase 1 (ball), found in Drosophila melanogaster (Fruit fly).